The sequence spans 282 residues: Undecaprenyl-diphosphatase (282 aa).

The next 7 helical transmembrane spans lie at 40–60 (GAAFSAIVQIGTLAAVLIYFY), 87–107 (MGWMIAAGTMPIVILGLLFKT), 116–136 (LYWISVALIVLALMLTLAEWL), 153–173 (IGWKEALLIGLAQSIALIPGS), 196–216 (FSFLLSLPAVFAAGIYQLYET), 229–249 (NLAVATLFAGIVGYASIAFLI), and 256–276 (STALFILYRIALGVGILGLIA).

It belongs to the UppP family.

Its subcellular location is the cell inner membrane. It carries out the reaction di-trans,octa-cis-undecaprenyl diphosphate + H2O = di-trans,octa-cis-undecaprenyl phosphate + phosphate + H(+). In terms of biological role, catalyzes the dephosphorylation of undecaprenyl diphosphate (UPP). Confers resistance to bacitracin. This is Undecaprenyl-diphosphatase from Chlorobium phaeobacteroides (strain BS1).